A 339-amino-acid polypeptide reads, in one-letter code: Ketol-acid reductoisomerase (NADP(+)) (339 aa).

In terms of domain architecture, KARI N-terminal Rossmann spans 1–182 (MKVYYDADCD…GGGRSGIIET (182 aa)). NADP(+)-binding positions include 24–27 (YGSQ), Arg-48, Ser-51, Ser-53, and 83–86 (DEHQ). His-108 is a catalytic residue. Gly-134 lines the NADP(+) pocket. Residues 183–328 (NFREECETDL…AKLRAMMPWI (146 aa)) enclose the KARI C-terminal knotted domain. The Mg(2+) site is built by Asp-191, Glu-195, Glu-227, and Glu-231. Residue Ser-252 coordinates substrate.

It belongs to the ketol-acid reductoisomerase family. It depends on Mg(2+) as a cofactor.

It catalyses the reaction (2R)-2,3-dihydroxy-3-methylbutanoate + NADP(+) = (2S)-2-acetolactate + NADPH + H(+). The enzyme catalyses (2R,3R)-2,3-dihydroxy-3-methylpentanoate + NADP(+) = (S)-2-ethyl-2-hydroxy-3-oxobutanoate + NADPH + H(+). It functions in the pathway amino-acid biosynthesis; L-isoleucine biosynthesis; L-isoleucine from 2-oxobutanoate: step 2/4. It participates in amino-acid biosynthesis; L-valine biosynthesis; L-valine from pyruvate: step 2/4. Its function is as follows. Involved in the biosynthesis of branched-chain amino acids (BCAA). Catalyzes an alkyl-migration followed by a ketol-acid reduction of (S)-2-acetolactate (S2AL) to yield (R)-2,3-dihydroxy-isovalerate. In the isomerase reaction, S2AL is rearranged via a Mg-dependent methyl migration to produce 3-hydroxy-3-methyl-2-ketobutyrate (HMKB). In the reductase reaction, this 2-ketoacid undergoes a metal-dependent reduction by NADPH to yield (R)-2,3-dihydroxy-isovalerate. This is Ketol-acid reductoisomerase (NADP(+)) from Novosphingobium aromaticivorans (strain ATCC 700278 / DSM 12444 / CCUG 56034 / CIP 105152 / NBRC 16084 / F199).